A 100-amino-acid polypeptide reads, in one-letter code: TrfB transcriptional repressor protein (100 aa).

Residues 37–56 (QAEFVTSLGLTKGAVSQAVS) constitute a DNA-binding region (H-T-H motif).

In terms of biological role, in conjunction with KorB, inhibits the transcription of kilA, trfA and korAB operons. In conjunction with KorC is responsible for the negative control of kilC and kilE operons. The sequence is that of TrfB transcriptional repressor protein (trfB) from Escherichia coli.